The sequence spans 334 residues: Glyceraldehyde-3-phosphate dehydrogenase (334 aa).

NAD(+) contacts are provided by residues 12-13, Asp34, and Arg79; that span reads RI. Residues 150–152, Thr181, 210–211, and Arg233 each bind D-glyceraldehyde 3-phosphate; these read SCT and TG. The active-site Nucleophile is the Cys151. Asn315 contributes to the NAD(+) binding site.

Belongs to the glyceraldehyde-3-phosphate dehydrogenase family. Homotetramer.

The protein resides in the cytoplasm. The catalysed reaction is D-glyceraldehyde 3-phosphate + phosphate + NAD(+) = (2R)-3-phospho-glyceroyl phosphate + NADH + H(+). The protein operates within carbohydrate degradation; glycolysis; pyruvate from D-glyceraldehyde 3-phosphate: step 1/5. The sequence is that of Glyceraldehyde-3-phosphate dehydrogenase (GPD) from Wickerhamomyces ciferrii (strain ATCC 14091 / BCRC 22168 / CBS 111 / JCM 3599 / NBRC 0793 / NRRL Y-1031 F-60-10) (Yeast).